Reading from the N-terminus, the 25-residue chain is Neuromedin-U-25 (25 aa).

At Asn-25 the chain carries Asparagine amide.

This sequence belongs to the NmU family.

It is found in the secreted. Stimulates uterine smooth muscle contraction and causes selective vasoconstriction. This Gallus gallus (Chicken) protein is Neuromedin-U-25 (NMU).